We begin with the raw amino-acid sequence, 223 residues long: Sigma non-opioid intracellular receptor 1 (223 aa).

The Lumenal segment spans residues 1-9; it reads MPWAAGRRW. A targeting to endoplasmic reticulum-associated lipid droplets region spans residues 2-8; sequence PWAAGRR. The helical transmembrane segment at 10-30 threads the bilayer; sequence AWITLILTIIAVLIQAAWLWL. Residues 31 to 223 are Cytoplasmic-facing; it reads GTQNFVFSRE…LTTYLFGQDS (193 aa). The tract at residues 99–106 is important for ligand-binding; that stretch reads SLSEYVLL. The segment at 177-223 is C-terminal hydrophobic region; the sequence is VIPSTLFFALADTFFSTQDYLTLFYTLRAYARGLRLELTTYLFGQDS.

This sequence belongs to the ERG2 family. As to quaternary structure, homotrimer. Interacts with KCNA4. Interacts with KCNA2; cocaine consumption leads to increased interaction. Forms a ternary complex with ANK2 and ITPR3. The complex is disrupted by agonists. Interacts with RNF112 in an oxidative stress-regulated manner. As to expression, widely expressed with higher expression in liver, brain, kidney and thymus. Expressed throughout the brain with higher expression within cerebral cortex, hippocampus and cerebellum. Within the hippocampus expressed in cornu ammonis pyramidal neurons, the granular cells of the dentate gyrus as well as interneurons. Within the cerebellum, expressed in Purkinje cell bodies. Highly expressed in the brainstem and motor neurons of the spinal cord. Expressed by neural retina, retinal pigment epithelial cells and lens.

The protein resides in the nucleus inner membrane. Its subcellular location is the nucleus outer membrane. It localises to the nucleus envelope. The protein localises to the cytoplasmic vesicle. It is found in the endoplasmic reticulum membrane. The protein resides in the membrane. Its subcellular location is the lipid droplet. It localises to the cell junction. The protein localises to the cell membrane. It is found in the cell projection. The protein resides in the growth cone. Its subcellular location is the postsynaptic density membrane. In terms of biological role, functions in lipid transport from the endoplasmic reticulum and is involved in a wide array of cellular functions probably through regulation of the biogenesis of lipid microdomains at the plasma membrane. Involved in the regulation of different receptors it plays a role in BDNF signaling and EGF signaling. Also regulates ion channels like the potassium channel and could modulate neurotransmitter release. Plays a role in calcium signaling through modulation together with ANK2 of the ITP3R-dependent calcium efflux at the endoplasmic reticulum. Plays a role in several other cell functions including proliferation, survival and death. Originally identified for its ability to bind various psychoactive drugs it is involved in learning processes, memory and mood alteration. Necessary for proper mitochondrial axonal transport in motor neurons, in particular the retrograde movement of mitochondria. Plays a role in protecting cells against oxidative stress-induced cell death via its interaction with RNF112. The sequence is that of Sigma non-opioid intracellular receptor 1 (Sigmar1) from Mus musculus (Mouse).